The following is a 148-amino-acid chain: Trypsin inhibitor CMe (148 aa).

A signal peptide spans Met-1–Ser-24.

Belongs to the protease inhibitor I6 (cereal trypsin/alpha-amylase inhibitor) family. Five disulfide bonds, which are essential for the inhibitor activity, are probably present. In terms of tissue distribution, expressed in the developing endosperm. Not detected in embryo, aleurone, coleoptile, roots and leaves.

It is found in the secreted. Inhibits trypsin in vitro. Probably plays a protective role through inhibition of insect midgut proteases. The chain is Trypsin inhibitor CMe (ITR1) from Hordeum vulgare (Barley).